A 559-amino-acid polypeptide reads, in one-letter code: Glucose-6-phosphate isomerase 2 (559 aa).

The Proton donor role is filled by Glu-367. Active-site residues include His-398 and Lys-522.

Belongs to the GPI family.

Its subcellular location is the cytoplasm. The catalysed reaction is alpha-D-glucose 6-phosphate = beta-D-fructose 6-phosphate. The protein operates within carbohydrate biosynthesis; gluconeogenesis. It functions in the pathway carbohydrate degradation; glycolysis; D-glyceraldehyde 3-phosphate and glycerone phosphate from D-glucose: step 2/4. Its function is as follows. Catalyzes the reversible isomerization of glucose-6-phosphate to fructose-6-phosphate. The protein is Glucose-6-phosphate isomerase 2 of Chromohalobacter salexigens (strain ATCC BAA-138 / DSM 3043 / CIP 106854 / NCIMB 13768 / 1H11).